Reading from the N-terminus, the 44-residue chain is Capsid protein G8P (44 aa).

The Periplasmic segment spans residues 1 to 18; sequence MQSVITDVTGQLTAVQAD. Residues 19–39 form a helical membrane-spanning segment; that stretch reads ITTIGGAIIVLAAVVLGIRWI. Residues 40–44 lie on the Cytoplasmic side of the membrane; that stretch reads KAQFF.

It belongs to the inovirus capsid protein family. In terms of assembly, homomultimerizes. There are several thousand copies of this protein in the phage capsid.

The protein resides in the virion. Its subcellular location is the host cell inner membrane. Self assembles to form a helical capsid wrapping up the viral genomic DNA. The capsid displays a filamentous structure with a length of 760-1950 nm and a width of 6-8 nm. The virion assembly and budding take place at the host inner membrane. The protein is Capsid protein G8P (VIII) of Pseudomonas aeruginosa (Bacteriophage Pf3).